The following is a 408-amino-acid chain: MLLNEIIDLIPNINKCLKKGKTLIIRIDINSPIVNGKIIDDFRIRAHSYTLRLASDAGARAVVLAHQGRPGQDDFTSLEIHKPYIEKYLERPIKFVDDIIGPEARRQIKELKDGEILLLENVRILSEEVIEKVPEAQAETLLVRKLAPLADYYVFDGFAVAHRSQPSVVGFPIVLPSCAGPVFERELRALGAVFEKRGRGVTLIAGGAKMPDTLKAVEQLLKNGFVEKVAVGGLVGFVFALGKYGVLNSALKQEVEKGGFLPYIERARQLLAKYGAQIYTPVDFAVNQNGRLDVDIYSLAQPPLDIGRSTTIAFKEVIEQSEIVIFSGPMGYIEDERFATGTIELLKAASNRRLILGGGHTIMAAEKAGVLDKAYHVSTGGRAFIQTIGGEEMPAVKALLTSAKKFSL.

Substrate-binding positions include 28–30 (DIN), Arg-43, 66–69 (HQGR), Arg-123, and Arg-163. ATP-binding positions include Glu-334 and 358 to 361 (GGHT).

This sequence belongs to the phosphoglycerate kinase family. Monomer.

It is found in the cytoplasm. The enzyme catalyses (2R)-3-phosphoglycerate + ATP = (2R)-3-phospho-glyceroyl phosphate + ADP. The protein operates within carbohydrate degradation; glycolysis; pyruvate from D-glyceraldehyde 3-phosphate: step 2/5. This chain is Phosphoglycerate kinase, found in Pyrobaculum aerophilum (strain ATCC 51768 / DSM 7523 / JCM 9630 / CIP 104966 / NBRC 100827 / IM2).